Reading from the N-terminus, the 564-residue chain is MCGIFCSVVNNVPLNSFNISSALKVILKNRGPDVQDEVVIDYCFGKILFAGFVLWQQGESVQKQPVVEDDFIFLFNGDIYNTSKPEYMSDTTWIAERLAECRCKEQNILKILKRLEGPHCLIIYDKREQILYFSRDALGRNSLLIERICNGFQLLSTSHFEDKKISLELPPLGLFRVKLNDLNSCVLYPWQPLNNYSTQLLRNLDLAIGWKTAVESPMSPDWMLNCNPAFSYNFYEFQYIKNNVNLYKNLIDQSEIKYTLSILHTLLSDSIKNRVRNMAPFCRLCMQKLNISPPCRHAKLCILFSGGLDCTILALLANQFVPVNEPIELINVAFESVKGQNISEKLFDVPDRKTSLVSVNELKQLCPERCWNLLKVNVTRLELQQHLTSRIKHLIYPLDTVLDESLGCAFWFASHCTHSTARVALIGSGADELFGGYTRYRNSYSRCLGNDLERQLAVQNELERDWQRISARNLARDDRIIADTGKTARSPFIEENFVKFIRSLEVYQKCCFGFPEGVGDKLLLRLYGYQIGLRDVVFLKKRAIQFGSRIANKKQNGSHQSDNL.

Cys2 functions as the Nucleophile in the catalytic mechanism. A Glutamine amidotransferase type-2 domain is found at 2–180 (CGIFCSVVNN…PLGLFRVKLN (179 aa)). In terms of domain architecture, Asparagine synthetase spans 280–541 (PFCRLCMQKL…GLRDVVFLKK (262 aa)).

The protein is Asparagine synthetase domain-containing protein CG17486 of Drosophila melanogaster (Fruit fly).